Reading from the N-terminus, the 361-residue chain is Probable dual-specificity RNA methyltransferase RlmN (361 aa).

E104 serves as the catalytic Proton acceptor. The 234-residue stretch at 110–343 (HEYGNSVCVT…VTIRREQGHD (234 aa)) folds into the Radical SAM core domain. An intrachain disulfide couples C117 to C348. 3 residues coordinate [4Fe-4S] cluster: C124, C128, and C131. S-adenosyl-L-methionine is bound by residues 174-175 (GE), S206, 229-231 (SLH), and N305. C348 (S-methylcysteine intermediate) is an active-site residue.

This sequence belongs to the radical SAM superfamily. RlmN family. It depends on [4Fe-4S] cluster as a cofactor.

The protein localises to the cytoplasm. It carries out the reaction adenosine(2503) in 23S rRNA + 2 reduced [2Fe-2S]-[ferredoxin] + 2 S-adenosyl-L-methionine = 2-methyladenosine(2503) in 23S rRNA + 5'-deoxyadenosine + L-methionine + 2 oxidized [2Fe-2S]-[ferredoxin] + S-adenosyl-L-homocysteine. The catalysed reaction is adenosine(37) in tRNA + 2 reduced [2Fe-2S]-[ferredoxin] + 2 S-adenosyl-L-methionine = 2-methyladenosine(37) in tRNA + 5'-deoxyadenosine + L-methionine + 2 oxidized [2Fe-2S]-[ferredoxin] + S-adenosyl-L-homocysteine. In terms of biological role, specifically methylates position 2 of adenine 2503 in 23S rRNA and position 2 of adenine 37 in tRNAs. This is Probable dual-specificity RNA methyltransferase RlmN from Bacillus licheniformis (strain ATCC 14580 / DSM 13 / JCM 2505 / CCUG 7422 / NBRC 12200 / NCIMB 9375 / NCTC 10341 / NRRL NRS-1264 / Gibson 46).